The sequence spans 79 residues: Dolichyl-diphosphooligosaccharide--protein glycosyltransferase subunit TMEM258 (79 aa).

M1 is subject to N-acetylmethionine. Topologically, residues 1–16 are lumenal; it reads MELEAMSRYTSPVNPA. Residues 17-37 form a helical membrane-spanning segment; sequence VFPHLTVVLLAIGMFFTAWFF. The Cytoplasmic portion of the chain corresponds to 38–54; it reads VYEVTSTKYTRDICKEL. Residues 55-75 traverse the membrane as a helical segment; it reads LISLVASLFMGFGVLFLLLWV. Over 76–79 the chain is Lumenal; the sequence is GIYV.

The protein belongs to the OST5 family. As to quaternary structure, component of the oligosaccharyltransferase (OST) complex. OST exists in two different complex forms which contain common core subunits RPN1, RPN2, OST48, OST4, DAD1 and TMEM258, either STT3A or STT3B as catalytic subunits, and form-specific accessory subunits. STT3A complex assembly occurs through the formation of 3 subcomplexes. Subcomplex 1 contains RPN1 and TMEM258, subcomplex 2 contains the STT3A-specific subunits STT3A, DC2/OSTC, and KCP2 as well as the core subunit OST4, and subcomplex 3 contains RPN2, DAD1, and OST48. The STT3A complex can form stable complexes with the Sec61 complex or with both the Sec61 and TRAP complexes.

It is found in the membrane. It localises to the endoplasmic reticulum. The protein localises to the cytoplasm. The protein operates within protein modification; protein glycosylation. Its function is as follows. Subunit of the oligosaccharyl transferase (OST) complex that catalyzes the initial transfer of a defined glycan (Glc(3)Man(9)GlcNAc(2) in eukaryotes) from the lipid carrier dolichol-pyrophosphate to an asparagine residue within an Asn-X-Ser/Thr consensus motif in nascent polypeptide chains, the first step in protein N-glycosylation. N-glycosylation occurs cotranslationally and the complex associates with the Sec61 complex at the channel-forming translocon complex that mediates protein translocation across the endoplasmic reticulum (ER). All subunits are required for a maximal enzyme activity. The chain is Dolichyl-diphosphooligosaccharide--protein glycosyltransferase subunit TMEM258 from Canis lupus familiaris (Dog).